Reading from the N-terminus, the 172-residue chain is Small ribosomal subunit protein uS5 (172 aa).

The region spanning 17–80 (LREKMIAINR…EEARRNLAKI (64 aa)) is the S5 DRBM domain.

The protein belongs to the universal ribosomal protein uS5 family. As to quaternary structure, part of the 30S ribosomal subunit. Contacts proteins S4 and S8.

Its function is as follows. With S4 and S12 plays an important role in translational accuracy. In terms of biological role, located at the back of the 30S subunit body where it stabilizes the conformation of the head with respect to the body. In Variovorax paradoxus (strain S110), this protein is Small ribosomal subunit protein uS5.